Consider the following 1276-residue polypeptide: Probable ubiquitin carboxyl-terminal hydrolase K02C4.3 (1276 aa).

Residues 168-762 (TGLYNSGNTC…SAYMLMYVRS (595 aa)) enclose the USP domain. Cysteine 177 serves as the catalytic Nucleophile. The segment at 375 to 402 (SMDTEAATSSNLPGNSVENHPNPAAPEV) is disordered. Residues 380 to 393 (AATSSNLPGNSVEN) show a composition bias toward polar residues. Histidine 707 serves as the catalytic Proton acceptor.

The protein belongs to the peptidase C19 family.

It carries out the reaction Thiol-dependent hydrolysis of ester, thioester, amide, peptide and isopeptide bonds formed by the C-terminal Gly of ubiquitin (a 76-residue protein attached to proteins as an intracellular targeting signal).. The sequence is that of Probable ubiquitin carboxyl-terminal hydrolase K02C4.3 from Caenorhabditis elegans.